We begin with the raw amino-acid sequence, 420 residues long: MSFPRGSYDPAASNSSPRWPLSAEDANSSREAAGHQKGSDPSGDVRNEELAKLEIAVLAVIFVVAVLGNSSVLLALHRTPRKTSRMHLFIRHLSLADLAVAFFQVLPQLCWDITYRFRGPDWLCRVVKHLQVFAMFASAYMLVVMTADRYIAVCHPLKTLQQPARRSRLMIAASWVLSFLLSTPQYFIFSMIEIEVNNGTKTQDCWATFIQPWGTRAYVTWMTSGVFVVPVVILGTCYGFICYHIWRNVRGKTASRQSKGSGEDVAPFHKGLLVTPCVSSVKTISRAKIRTVKMTFVIVTAYILCWAPFFIVQMWSVWDDNFIWTDSENPSITITALLASLNSCCNPWIYMFFSGHLLQDCVQSFPCCQRMVQKFTKDDSDNMSRRQTSYSNNRSPTNSTGTWKDSPKSSRSIRFIPVST.

A disordered region spans residues 1 to 45 (MSFPRGSYDPAASNSSPRWPLSAEDANSSREAAGHQKGSDPSGDV). Topologically, residues 1–54 (MSFPRGSYDPAASNSSPRWPLSAEDANSSREAAGHQKGSDPSGDVRNEELAKLE) are extracellular. The N-linked (GlcNAc...) asparagine glycan is linked to Asn-27. The segment covering 32–45 (AAGHQKGSDPSGDV) has biased composition (basic and acidic residues). Residues 55–75 (IAVLAVIFVVAVLGNSSVLLA) traverse the membrane as a helical segment. Residues 76–92 (LHRTPRKTSRMHLFIRH) are Cytoplasmic-facing. The chain crosses the membrane as a helical span at residues 93–113 (LSLADLAVAFFQVLPQLCWDI). Over 114-125 (TYRFRGPDWLCR) the chain is Extracellular. A disulfide bridge links Cys-124 with Cys-205. A helical membrane pass occupies residues 126–146 (VVKHLQVFAMFASAYMLVVMT). The Cytoplasmic portion of the chain corresponds to 147-168 (ADRYIAVCHPLKTLQQPARRSR). The helical transmembrane segment at 169–189 (LMIAASWVLSFLLSTPQYFIF) threads the bilayer. Residues 190–225 (SMIEIEVNNGTKTQDCWATFIQPWGTRAYVTWMTSG) are Extracellular-facing. Asn-198 carries N-linked (GlcNAc...) asparagine glycosylation. A helical transmembrane segment spans residues 226-246 (VFVVPVVILGTCYGFICYHIW). Residues 247 to 294 (RNVRGKTASRQSKGSGEDVAPFHKGLLVTPCVSSVKTISRAKIRTVKM) are Cytoplasmic-facing. A helical membrane pass occupies residues 295–315 (TFVIVTAYILCWAPFFIVQMW). Residues 316 to 331 (SVWDDNFIWTDSENPS) are Extracellular-facing. Residues 332–352 (ITITALLASLNSCCNPWIYMF) traverse the membrane as a helical segment. Residues 353-420 (FSGHLLQDCV…RSIRFIPVST (68 aa)) are Cytoplasmic-facing. Residues Cys-367 and Cys-368 are each lipidated (S-palmitoyl cysteine). A disordered region spans residues 379-411 (DSDNMSRRQTSYSNNRSPTNSTGTWKDSPKSSR). Positions 385–403 (RRQTSYSNNRSPTNSTGTW) are enriched in polar residues. Position 406 is a phosphoserine (Ser-406).

The protein belongs to the G-protein coupled receptor 1 family. Vasopressin/oxytocin receptor subfamily.

It localises to the cell membrane. In terms of biological role, receptor for arginine vasopressin. The activity of this receptor is mediated by G proteins which activate a phosphatidyl-inositol-calcium second messenger system. Involved in social memory formation. The protein is Vasopressin V1a receptor (Avpr1a) of Microtus montanus (Montane vole).